Here is a 755-residue protein sequence, read N- to C-terminus: Xaa-Pro dipeptidyl-peptidase (755 aa).

Catalysis depends on charge relay system residues serine 348, aspartate 468, and histidine 498.

It belongs to the peptidase S15 family. In terms of assembly, homodimer.

The protein localises to the cytoplasm. The catalysed reaction is Hydrolyzes Xaa-Pro-|- bonds to release unblocked, N-terminal dipeptides from substrates including Ala-Pro-|-p-nitroanilide and (sequentially) Tyr-Pro-|-Phe-Pro-|-Gly-Pro-|-Ile.. Removes N-terminal dipeptides sequentially from polypeptides having unsubstituted N-termini provided that the penultimate residue is proline. The protein is Xaa-Pro dipeptidyl-peptidase of Streptococcus thermophilus (strain CNRZ 1066).